A 601-amino-acid polypeptide reads, in one-letter code: DNA mismatch repair protein MutL (601 aa).

This sequence belongs to the DNA mismatch repair MutL/HexB family.

Its function is as follows. This protein is involved in the repair of mismatches in DNA. It is required for dam-dependent methyl-directed DNA mismatch repair. May act as a 'molecular matchmaker', a protein that promotes the formation of a stable complex between two or more DNA-binding proteins in an ATP-dependent manner without itself being part of a final effector complex. In Listeria monocytogenes serovar 1/2a (strain ATCC BAA-679 / EGD-e), this protein is DNA mismatch repair protein MutL.